The primary structure comprises 229 residues: Cytosolic-abundant heat soluble protein 107838 (229 aa).

Residues 1-29 (MSAEAMNMNMNQDAVFIPPPEGEQYERKE) are disordered. The stretch at 109–145 (LSANYQKEVERKTEAYRKQQEVEADKIRKELEKQHLR) forms a coiled coil. CAHS motif stretches follow at residues 124–142 (YRKQQEVEADKIRKELEKQ) and 161–179 (QKKMIDVESRYAKKDMDRE). Residues 202 to 218 (SSAAGTETGGQVVSESQ) show a composition bias toward polar residues. The segment at 202-229 (SSAAGTETGGQVVSESQKFTERNRQIKQ) is disordered. Residues 219–229 (KFTERNRQIKQ) show a composition bias toward basic and acidic residues.

It belongs to the Cytosolic-abundant heat soluble protein (CAHS) family.

The protein localises to the cytoplasm. In terms of biological role, CAHS proteins are cytosolic heat soluble proteins that seem to contribute to the anhydrobiosis in tardigrades, but their specific mechanisms are yet to be identified. It is possible that protection during anhydrobiosis might occur via the stabilization of vitrifying small molecules such as sugars, but not via the direct glass transition of CAHS proteins themselves. The chain is Cytosolic-abundant heat soluble protein 107838 from Paramacrobiotus richtersi (Water bear).